Consider the following 199-residue polypeptide: NAD(P)H dehydrogenase (quinone) (199 aa).

The region spanning 4–190 is the Flavodoxin-like domain; the sequence is VLVLYYSAYG…AGARYQGKTI (187 aa). Residues 10 to 15 and 78 to 80 contribute to the FMN site; these read SAYGHI and TRF. Residue tyrosine 12 participates in NAD(+) binding. Tryptophan 98 is a substrate binding site. Residues 113-119 and histidine 134 contribute to the FMN site; that span reads STATQHG.

The protein belongs to the WrbA family. Requires FMN as cofactor.

The enzyme catalyses a quinone + NADH + H(+) = a quinol + NAD(+). The catalysed reaction is a quinone + NADPH + H(+) = a quinol + NADP(+). The chain is NAD(P)H dehydrogenase (quinone) from Rhodopseudomonas palustris (strain BisB5).